The following is a 126-amino-acid chain: Large ribosomal subunit protein bL12 (126 aa).

It belongs to the bacterial ribosomal protein bL12 family. Homodimer. Part of the ribosomal stalk of the 50S ribosomal subunit. Forms a multimeric L10(L12)X complex, where L10 forms an elongated spine to which 2 to 4 L12 dimers bind in a sequential fashion. Binds GTP-bound translation factors.

Forms part of the ribosomal stalk which helps the ribosome interact with GTP-bound translation factors. Is thus essential for accurate translation. The sequence is that of Large ribosomal subunit protein bL12 from Bordetella avium (strain 197N).